The sequence spans 325 residues: Glutarate 2-hydroxylase (325 aa).

His160, Asp162, and His292 together coordinate Fe cation.

Belongs to the glutarate hydroxylase family. Homotetramer. Requires Fe(2+) as cofactor.

It carries out the reaction glutarate + 2-oxoglutarate + O2 = (S)-2-hydroxyglutarate + succinate + CO2. It participates in amino-acid degradation. Its function is as follows. Acts as an alpha-ketoglutarate-dependent dioxygenase catalyzing hydroxylation of glutarate (GA) to L-2-hydroxyglutarate (L2HG). Functions in a L-lysine degradation pathway that proceeds via cadaverine, glutarate and L-2-hydroxyglutarate. This is Glutarate 2-hydroxylase from Klebsiella pneumoniae (strain 342).